The primary structure comprises 364 residues: Fructose-bisphosphate aldolase B (364 aa).

N-acetylalanine is present on A2. N6-succinyllysine is present on K13. S36 carries the phosphoserine modification. Position 39 is a phosphothreonine (T39). R43 contacts beta-D-fructose 1,6-bisphosphate. S89 carries the post-translational modification Phosphoserine. Phosphothreonine is present on T119. At K121 the chain carries N6-succinyllysine. A Phosphoserine modification is found at S132. Residue E188 is the Proton acceptor of the active site. The active-site Schiff-base intermediate with dihydroxyacetone-P is K230. Phosphoserine occurs at positions 272, 276, 299, and 301. Residue 272–274 participates in beta-D-fructose 1,6-bisphosphate binding; the sequence is SGG. R304 is a binding site for beta-D-fructose 1,6-bisphosphate. S309 is modified (phosphoserine). Residue K317 is modified to N6-succinyllysine.

It belongs to the class I fructose-bisphosphate aldolase family. As to quaternary structure, homotetramer. Interacts with BBS1, BBS2, BBS4 and BBS7. Forms a ternary complex with G6PD and TP53; this interaction is direct.

It localises to the cytoplasm. The protein localises to the cytosol. It is found in the cytoskeleton. The protein resides in the microtubule organizing center. Its subcellular location is the centrosome. It localises to the centriolar satellite. The catalysed reaction is beta-D-fructose 1,6-bisphosphate = D-glyceraldehyde 3-phosphate + dihydroxyacetone phosphate. The enzyme catalyses beta-D-fructose 1-phosphate = D-glyceraldehyde + dihydroxyacetone phosphate. It functions in the pathway carbohydrate degradation; glycolysis; D-glyceraldehyde 3-phosphate and glycerone phosphate from D-glucose: step 4/4. The protein operates within carbohydrate biosynthesis; gluconeogenesis. It participates in carbohydrate metabolism; fructose metabolism. Functionally, catalyzes the aldol cleavage of fructose 1,6-biphosphate to form two triosephosphates dihydroxyacetone phosphate and D-glyceraldehyde 3-phosphate in glycolysis as well as the reverse stereospecific aldol addition reaction in gluconeogenesis. In fructolysis, metabolizes fructose 1-phosphate derived from the phosphorylation of dietary fructose by fructokinase into dihydroxyacetone phosphate and D-glyceraldehyde. Acts as an adapter independently of its enzymatic activity, exerts a tumor suppressor role by stabilizing the ternary complex with G6PD and TP53 to inhibit G6PD activity and keep oxidative pentose phosphate metabolism in check. The polypeptide is Fructose-bisphosphate aldolase B (ALDOB) (Pongo abelii (Sumatran orangutan)).